Consider the following 166-residue polypeptide: Ribosome-binding factor A (166 aa).

The tract at residues 122-166 (HVADETDVEDSTDHEDDVTNSEDETKHVDIDTDSEEGTNTDGKAQ) is disordered. Residues 126 to 143 (ETDVEDSTDHEDDVTNSE) show a composition bias toward acidic residues.

It belongs to the RbfA family. In terms of assembly, monomer. Binds 30S ribosomal subunits, but not 50S ribosomal subunits or 70S ribosomes.

It is found in the cytoplasm. In terms of biological role, one of several proteins that assist in the late maturation steps of the functional core of the 30S ribosomal subunit. Associates with free 30S ribosomal subunits (but not with 30S subunits that are part of 70S ribosomes or polysomes). Required for efficient processing of 16S rRNA. May interact with the 5'-terminal helix region of 16S rRNA. This is Ribosome-binding factor A from Pseudoalteromonas translucida (strain TAC 125).